The primary structure comprises 501 residues: Probable cytochrome P450 6a20 (501 aa).

Residue Cys445 participates in heme binding.

The protein belongs to the cytochrome P450 family. Requires heme as cofactor.

The protein resides in the endoplasmic reticulum membrane. It is found in the microsome membrane. Its function is as follows. May be involved in the metabolism of insect hormones and in the breakdown of synthetic insecticides. This chain is Probable cytochrome P450 6a20 (Cyp6a20), found in Drosophila melanogaster (Fruit fly).